A 647-amino-acid polypeptide reads, in one-letter code: Acetyl-coenzyme A synthetase (647 aa).

CoA is bound by residues 190–193 (RGGK), Thr310, and Asn334. ATP-binding positions include 386–388 (GEP), 410–415 (DTWWQT), Asp499, and Arg514. Ser522 is a CoA binding site. Arg525 lines the ATP pocket. Val536, His538, and Val541 together coordinate Mg(2+). Residue Arg583 participates in CoA binding. Lys608 bears the N6-acetyllysine mark.

The protein belongs to the ATP-dependent AMP-binding enzyme family. Mg(2+) is required as a cofactor. In terms of processing, acetylated. Deacetylation by the SIR2-homolog deacetylase activates the enzyme.

The catalysed reaction is acetate + ATP + CoA = acetyl-CoA + AMP + diphosphate. Its function is as follows. Catalyzes the conversion of acetate into acetyl-CoA (AcCoA), an essential intermediate at the junction of anabolic and catabolic pathways. AcsA undergoes a two-step reaction. In the first half reaction, AcsA combines acetate with ATP to form acetyl-adenylate (AcAMP) intermediate. In the second half reaction, it can then transfer the acetyl group from AcAMP to the sulfhydryl group of CoA, forming the product AcCoA. The polypeptide is Acetyl-coenzyme A synthetase (Xanthomonas oryzae pv. oryzae (strain MAFF 311018)).